Here is a 100-residue protein sequence, read N- to C-terminus: Small ribosomal subunit protein uS14 (100 aa).

The protein belongs to the universal ribosomal protein uS14 family. In terms of assembly, part of the 30S ribosomal subunit. Contacts proteins S3 and S10.

Its function is as follows. Binds 16S rRNA, required for the assembly of 30S particles and may also be responsible for determining the conformation of the 16S rRNA at the A site. The sequence is that of Small ribosomal subunit protein uS14 from Thermosynechococcus vestitus (strain NIES-2133 / IAM M-273 / BP-1).